A 257-amino-acid chain; its full sequence is Alkaline phosphatase synthesis transcriptional regulatory protein SphR (257 aa).

In terms of domain architecture, Response regulatory spans 25–148 (RILVVEDEAV…ELVARCRALL (124 aa)). D83 bears the 4-aspartylphosphate mark. A DNA-binding region (ompR/PhoB-type) is located at residues 159–257 (PAVLRYEGLK…TVRGFGYRLG (99 aa)).

Post-translationally, phosphorylated by SphS.

In terms of biological role, member of the two-component regulatory system SphR/SphS. Response regulator. Involved in inducible production of alkaline phosphatase in response to phosphate limitation as it is directly involved in the regulation of phoA transcription in response to phosphate limitation. Binds to two distinct sites upstream from the phoA promoter. This Synechococcus elongatus (strain ATCC 33912 / PCC 7942 / FACHB-805) (Anacystis nidulans R2) protein is Alkaline phosphatase synthesis transcriptional regulatory protein SphR (sphR).